The primary structure comprises 82 residues: Small ribosomal subunit protein bS16 (82 aa).

The protein belongs to the bacterial ribosomal protein bS16 family.

The chain is Small ribosomal subunit protein bS16 from Dehalococcoides mccartyi (strain ATCC BAA-2266 / KCTC 15142 / 195) (Dehalococcoides ethenogenes (strain 195)).